Reading from the N-terminus, the 778-residue chain is Dapper homolog 1 (778 aa).

Composition is skewed to basic and acidic residues over residues 1-10 (MKPDAAREPE) and 18-40 (AEAEGRWRERGEADTERQRTRER). A disordered region spans residues 1-40 (MKPDAAREPEPLSPGRGAEAEGRWRERGEADTERQRTRER). A required for self-association region spans residues 85–149 (DAAQRSRLEE…SEEHLETDSR (65 aa)). Positions 85–149 (DAAQRSRLEE…SEEHLETDSR (65 aa)) form a coiled coil. The Nuclear export signal signature appears at 125-134 (LDKQISDLRL). Disordered stretches follow at residues 305–324 (KTHPVRTNKPRTSVNADPTK), 359–386 (GGITSLENGPFSPPKQRSKDSKTDQLES), 397–416 (AGAAMEPQSKHVPKAAKAAS), 428–468 (ESMK…SQKN), 544–616 (EKPR…HKRT), and 694–721 (NCFGDSESSVSEGDFVGESTTTSDSEES). A compositionally biased stretch (basic and acidic residues) spans 375-386 (RSKDSKTDQLES). Residues 432–443 (ESNQASAVSPKT) show a composition bias toward polar residues. The Bipartite nuclear localization signal motif lies at 551–564 (KKCRFPDDSDTNKK). A compositionally biased stretch (basic and acidic residues) spans 554–563 (RFPDDSDTNK). Residues 564–574 (KFRKTSAKGRR) are compositionally biased toward basic residues. Positions 694–704 (NCFGDSESSVS) are enriched in polar residues. The PDZ-binding signature appears at 768–778 (RSGSLKLMTTV). Residue Ser769 is modified to Phosphoserine; by PKA.

This sequence belongs to the dapper family. In terms of assembly, can form homodimers and heterodimers with DACT2 or DACT3. Interacts with CSNK1D, PKA catalytic subunit, PKC-type kinase, CSNK2A1, CSNK2B, DVL1, DLV2, DVAL3, VANGL1, VANGL2, CTNND1 and HDAC1. Interacts with GSK3B; the interaction is indicative for an association of DACT1 with the beta-catenin destruction complex. Interacts with GSK3A. Interacts with YWHAB; the interaction is enhanced by PKA phosphorylating DACT1 at Ser-769. Interacts with CTNNB1. As to expression, expressed in multiple tissues including brain, heart, kidney, liver and testis.

The protein localises to the cytoplasm. It localises to the nucleus. Its subcellular location is the synapse. Functionally, involved in regulation of intracellular signaling pathways during development. Specifically thought to play a role in canonical and/or non-canonical Wnt signaling pathways through interaction with DSH (Dishevelled) family proteins. The activation/inhibition of Wnt signaling may depend on the phosphorylation status. Proposed to regulate the degradation of CTNNB1/beta-catenin, thereby modulating the transcriptional activation of target genes of the Wnt signaling pathway. Its function in stabilizing CTNNB1 may involve inhibition of GSK3B activity. Promotes the membrane localization of CTNNB1. The cytoplasmic form can induce DVL2 degradation via a lysosome-dependent mechanism; the function is inhibited by PKA-induced binding to 14-3-3 proteins, such as YWHAB. Seems to be involved in morphogenesis at the primitive streak by regulating VANGL2 and DVL2; the function seems to be independent of canonical Wnt signaling and rather involves the non-canonical Wnt/planar cell polarity (PCP) pathway. The nuclear form may prevent the formation of LEF1:CTNNB1 complex and recruit HDAC1 to LEF1 at target gene promoters to repress transcription thus antagonizing Wnt signaling. May be involved in positive regulation of fat cell differentiation. During neuronal differentiation may be involved in excitatory synapse organization, and dendrite formation and establishment of spines. The protein is Dapper homolog 1 (Dact1) of Mus musculus (Mouse).